Here is a 202-residue protein sequence, read N- to C-terminus: dTTP/UTP pyrophosphatase (202 aa).

Residue aspartate 74 is the Proton acceptor of the active site.

The protein belongs to the Maf family. YhdE subfamily. Requires a divalent metal cation as cofactor.

The protein resides in the cytoplasm. The catalysed reaction is dTTP + H2O = dTMP + diphosphate + H(+). The enzyme catalyses UTP + H2O = UMP + diphosphate + H(+). Functionally, nucleoside triphosphate pyrophosphatase that hydrolyzes dTTP and UTP. May have a dual role in cell division arrest and in preventing the incorporation of modified nucleotides into cellular nucleic acids. This chain is dTTP/UTP pyrophosphatase, found in Methylococcus capsulatus (strain ATCC 33009 / NCIMB 11132 / Bath).